Consider the following 466-residue polypeptide: Magnetosome-associated protein MamJ (466 aa).

Disordered regions lie at residues 1–23 and 60–80; these read MAKNRRDRGTDLPGDGDQKISTG and ANQGGLVETAQPPSAPIRSQD. The not required to restore magnetic response to deletion mutant stretch occupies residues 1 to 24; that stretch reads MAKNRRDRGTDLPGDGDQKISTGP. Positions 25-80 are required to restore magnetic response to deletion mutant; sequence EIVSVTVHPSPNLAAAAKPVQGDIWASLLESSPWSANQGGLVETAQPPSAPIRSQD. Tandem repeat unit repeat units follow at residues 81-168 and 169-256; these read PVPV…VEPE and PAPV…VEPE. 4 not required to restore magnetic response to deletion mutant regions span residues 81–256, 136–334, 333–374, and 432–466; these read PVPV…VEPE, ETDA…SQAE, AESV…AVEA, and VGSNVVAGTRRLAQTIEVSCGSCSSPKCDAEDKNK. Glu-Pro-rich motif repeat units follow at residues 145-164, 233-252, and 253-272; these read IEPEPALVEPVIEIEAEAAE and VEPEPAPVEPVIEIEAEAAE. 2 required to restore magnetic response to deletion mutant regions span residues 375–432 and 426–466; these read TRQP…GRLV and VKGG…DKNK.

This sequence belongs to the magnetosome MamJ protein family. Forms homooligomers. Interacts with MamK. In terms of processing, identified by N-terminal sequencing of a protein that is about 96 kDa in size. The protein runs anomalously on protein gels.

Its subcellular location is the magnetosome. Its function is as follows. Required for assembly of magnetosome chains. Regulates the dynamic behavior of MamK filaments. May connect magnetosomes to MamK filaments. Moves from the cell poles towards midcell; movement does not depend on the treadmilling ability of MamK, suggesting MamJ associates and disassociates continuously from the MamK filament. The protein is Magnetosome-associated protein MamJ of Magnetospirillum gryphiswaldense (strain DSM 6361 / JCM 21280 / NBRC 15271 / MSR-1).